The chain runs to 113 residues: Small ribosomal subunit protein bS6 (113 aa).

It belongs to the bacterial ribosomal protein bS6 family.

In terms of biological role, binds together with bS18 to 16S ribosomal RNA. This chain is Small ribosomal subunit protein bS6, found in Flavobacterium psychrophilum (strain ATCC 49511 / DSM 21280 / CIP 103535 / JIP02/86).